Reading from the N-terminus, the 491-residue chain is Trigger factor (491 aa).

Positions glycine 169 to isoleucine 254 constitute a PPIase FKBP-type domain. Positions lysine 434 to glutamate 491 are disordered. Basic residues predominate over residues lysine 452–alanine 461.

It belongs to the FKBP-type PPIase family. Tig subfamily.

It localises to the cytoplasm. The enzyme catalyses [protein]-peptidylproline (omega=180) = [protein]-peptidylproline (omega=0). Involved in protein export. Acts as a chaperone by maintaining the newly synthesized protein in an open conformation. Functions as a peptidyl-prolyl cis-trans isomerase. The sequence is that of Trigger factor from Sinorhizobium medicae (strain WSM419) (Ensifer medicae).